The sequence spans 325 residues: Holliday junction branch migration complex subunit RuvB (325 aa).

The segment at 1-172 (MENNELLDIT…FGVVFRLEFY (172 aa)) is large ATPase domain (RuvB-L). Residues L11, R12, G53, K56, T57, T58, 119–121 (EDF), R162, Y172, and R209 contribute to the ATP site. T57 contacts Mg(2+). Residues 173-243 (NSEELKEIVK…IAQEALIAMD (71 aa)) form a small ATPAse domain (RuvB-S) region. A head domain (RuvB-H) region spans residues 246-325 (DYGLDDMDRK…LKRKIPERLF (80 aa)). R301 and R306 together coordinate DNA.

Belongs to the RuvB family. As to quaternary structure, homohexamer. Forms an RuvA(8)-RuvB(12)-Holliday junction (HJ) complex. HJ DNA is sandwiched between 2 RuvA tetramers; dsDNA enters through RuvA and exits via RuvB. An RuvB hexamer assembles on each DNA strand where it exits the tetramer. Each RuvB hexamer is contacted by two RuvA subunits (via domain III) on 2 adjacent RuvB subunits; this complex drives branch migration. In the full resolvosome a probable DNA-RuvA(4)-RuvB(12)-RuvC(2) complex forms which resolves the HJ.

It localises to the cytoplasm. It carries out the reaction ATP + H2O = ADP + phosphate + H(+). The RuvA-RuvB-RuvC complex processes Holliday junction (HJ) DNA during genetic recombination and DNA repair, while the RuvA-RuvB complex plays an important role in the rescue of blocked DNA replication forks via replication fork reversal (RFR). RuvA specifically binds to HJ cruciform DNA, conferring on it an open structure. The RuvB hexamer acts as an ATP-dependent pump, pulling dsDNA into and through the RuvAB complex. RuvB forms 2 homohexamers on either side of HJ DNA bound by 1 or 2 RuvA tetramers; 4 subunits per hexamer contact DNA at a time. Coordinated motions by a converter formed by DNA-disengaged RuvB subunits stimulates ATP hydrolysis and nucleotide exchange. Immobilization of the converter enables RuvB to convert the ATP-contained energy into a lever motion, pulling 2 nucleotides of DNA out of the RuvA tetramer per ATP hydrolyzed, thus driving DNA branch migration. The RuvB motors rotate together with the DNA substrate, which together with the progressing nucleotide cycle form the mechanistic basis for DNA recombination by continuous HJ branch migration. Branch migration allows RuvC to scan DNA until it finds its consensus sequence, where it cleaves and resolves cruciform DNA. This is Holliday junction branch migration complex subunit RuvB from Thermodesulfovibrio yellowstonii (strain ATCC 51303 / DSM 11347 / YP87).